The following is a 727-amino-acid chain: BRCA1-A complex subunit RAP80 (727 aa).

The segment at 1–23 is disordered; that stretch reads MPRRKKKIKEASESQNLEKKDLE. A necessary for transcriptional repression region spans residues 1–101; the sequence is MPRRKKKIKE…SEQEAREVNN (101 aa). Positions 9 to 23 are enriched in basic and acidic residues; the sequence is KEASESQNLEKKDLE. Lys-20 participates in a covalent cross-link: Glycyl lysine isopeptide (Lys-Gly) (interchain with G-Cter in SUMO2). Position 29 is a phosphoserine (Ser-29). A Glycyl lysine isopeptide (Lys-Gly) (interchain with G-Cter in SUMO2) cross-link involves residue Lys-31. Phosphoserine occurs at positions 44 and 46. The tract at residues 45–70 is disordered; that stretch reads DSDGEETKEENGLQKTKTKQSNRSKC. At Thr-51 the chain carries Phosphothreonine. Positions 60–70 are enriched in basic residues; that stretch reads TKTKQSNRSKC. The LR motif signature appears at 60–78; the sequence is TKTKQSNRSKCLAKRKVAH. Residues Lys-75 and Lys-90 each participate in a glycyl lysine isopeptide (Lys-Gly) (interchain with G-Cter in SUMO2) cross-link. 2 consecutive UIM domains span residues 80 to 99 and 104 to 124; these read SEEEQFALALKMSEQEAREV and EKEEELLRKAIAESLNSCWSS. The UIM-linker stretch occupies residues 97–103; that stretch reads REVNNQE. The necessary for interaction with NR6A1 N-terminus stretch occupies residues 100–200; sequence NNQEEKEEEL…EEPVSGSSGS (101 aa). Residues 133-206 are disordered; sequence PLAAELSSHS…SSGSWDQSSQ (74 aa). A Phosphoserine modification is found at Ser-140. Positions 176-188 are enriched in basic and acidic residues; it reads AEQRKEPWDHNEN. A compositionally biased stretch (low complexity) spans 195–206; that stretch reads SGSSGSWDQSSQ. Residue Ser-205 is modified to Phosphoserine. Residue Lys-245 forms a Glycyl lysine isopeptide (Lys-Gly) (interchain with G-Cter in SUMO2) linkage. Residues 270–400 are AIR; the sequence is TGGTVHYYWG…EEEPTTSRGQ (131 aa). Residues 326–427 form a disordered region; it reads PRPPFLIQNE…SEGDNSVPTT (102 aa). Residues 355-364 are compositionally biased toward basic and acidic residues; the sequence is DEAKEERQES. A Phosphoserine modification is found at Ser-379. Residues Lys-382 and Lys-387 each participate in a glycyl lysine isopeptide (Lys-Gly) (interchain with G-Cter in SUMO2) cross-link. Positions 400 to 508 are necessary for interaction with NR6A1 C-terminus; sequence QSSQGLFVEE…ENPPPAVSSS (109 aa). Position 402 is a phosphoserine (Ser-402). Lys-436 participates in a covalent cross-link: Glycyl lysine isopeptide (Lys-Gly) (interchain with G-Cter in SUMO2). Phosphoserine is present on Ser-474. Residues 510–537 form a UBZ4-type zinc finger; that stretch reads RVSCPLCNQDFPPTKIEQHAMYCNGLME. Positions 513, 516, 528, and 532 each coordinate Zn(2+). The zinc-finger-like region stretch occupies residues 513–590; it reads CPLCNQDFPP…GEYQCHVEAC (78 aa). Residues Lys-552, Lys-570, Lys-595, and Lys-617 each participate in a glycyl lysine isopeptide (Lys-Gly) (interchain with G-Cter in SUMO2) cross-link. The interval 607–654 is disordered; that stretch reads RPRVCAPVEGKQQQRLKKSKDKGHSQGRLLSLLEQSEHRTTGVEKKPK. Residue Ser-637 is modified to Phosphoserine. Over residues 641 to 654 the composition is skewed to basic and acidic residues; the sequence is QSEHRTTGVEKKPK. Lys-652 is covalently cross-linked (Glycyl lysine isopeptide (Lys-Gly) (interchain with G-Cter in SUMO2)). 2 positions are modified to phosphoserine: Ser-665 and Ser-689. Lys-708 is covalently cross-linked (Glycyl lysine isopeptide (Lys-Gly) (interchain with G-Cter in SUMO2)).

This sequence belongs to the RAP80 family. In terms of assembly, component of the ARISC complex, at least composed of UIMC1/RAP80, ABRAXAS1, BRCC3/BRCC36, BABAM2 and BABAM1/NBA1. Component of the BRCA1-A complex, at least composed of the BRCA1, BARD1, UIMC1/RAP80, ABRAXAS1, BRCC3/BRCC36, BABAM2 and BABAM1/NBA1. In the BRCA1-A complex, interacts directly with ABRAXAS1. Interacts with ESR1. Interacts with UBE2I. Interacts with NR6A1. Interacts with TSP57. Interacts with TRAIP. In terms of processing, sumoylated. Post-translationally, phosphorylated upon DNA damage by ATM or ATR.

The protein resides in the nucleus. In terms of biological role, ubiquitin-binding protein. Specifically recognizes and binds 'Lys-63'-linked ubiquitin. Plays a central role in the BRCA1-A complex by specifically binding 'Lys-63'-linked ubiquitinated histones H2A and H2AX at DNA lesions sites, leading to target the BRCA1-BARD1 heterodimer to sites of DNA damage at double-strand breaks (DSBs). The BRCA1-A complex also possesses deubiquitinase activity that specifically removes 'Lys-63'-linked ubiquitin on histones H2A and H2AX. Also weakly binds monoubiquitin but with much less affinity than 'Lys-63'-linked ubiquitin. May interact with monoubiquitinated histones H2A and H2B; the relevance of such results is however unclear in vivo. Does not bind Lys-48'-linked ubiquitin. May indirectly act as a transcriptional repressor by inhibiting the interaction of NR6A1 with the corepressor NCOR1. The sequence is that of BRCA1-A complex subunit RAP80 (Uimc1) from Mus musculus (Mouse).